Reading from the N-terminus, the 488-residue chain is NADH-quinone oxidoreductase subunit N (488 aa).

14 helical membrane passes run 15-35, 42-62, 79-99, 108-128, 133-153, 168-188, 209-229, 243-263, 277-297, 305-325, 333-353, 376-396, 409-429, and 456-476; these read LALP…VDLY, GMTF…AIVA, NLAA…FAYC, LLKG…MIMA, LMTV…MVAF, FVLG…IYGA, WLLL…FGAV, PTTV…ALFV, WQPM…LAAL, MLAY…IAGT, LFYA…IILL, MALM…TVGF, VGLV…AFYY, and GLLV…DSLI.

Belongs to the complex I subunit 2 family. In terms of assembly, NDH-1 is composed of 14 different subunits. Subunits NuoA, H, J, K, L, M, N constitute the membrane sector of the complex.

Its subcellular location is the cell inner membrane. The enzyme catalyses a quinone + NADH + 5 H(+)(in) = a quinol + NAD(+) + 4 H(+)(out). Functionally, NDH-1 shuttles electrons from NADH, via FMN and iron-sulfur (Fe-S) centers, to quinones in the respiratory chain. The immediate electron acceptor for the enzyme in this species is believed to be ubiquinone. Couples the redox reaction to proton translocation (for every two electrons transferred, four hydrogen ions are translocated across the cytoplasmic membrane), and thus conserves the redox energy in a proton gradient. The sequence is that of NADH-quinone oxidoreductase subunit N from Alkalilimnicola ehrlichii (strain ATCC BAA-1101 / DSM 17681 / MLHE-1).